The primary structure comprises 878 residues: NUT family member 2B (878 aa).

Disordered regions lie at residues 273 to 324, 417 to 512, 527 to 560, 624 to 693, 709 to 757, and 775 to 878; these read WSQG…DDSC, QKSQ…PEEI, LLGPSLGATGEPEKQREEGKVKQPQEEDWTPPDP, PPLK…GMAR, LRAA…EEEE, and WLPQ…HCSQ. Composition is skewed to pro residues over residues 278–288 and 427–444; these read PLPPPPPPAAQ and CLPPPATPRLEPRGPPAP. The span at 476–487 shows a compositional bias: basic residues; sequence TKARRPPPRPHR. A compositionally biased stretch (basic and acidic residues) spans 537-551; that stretch reads EPEKQREEGKVKQPQ.

Belongs to the NUT family.

This chain is NUT family member 2B (NUTM2B), found in Homo sapiens (Human).